Reading from the N-terminus, the 289-residue chain is 4-diphosphocytidyl-2-C-methyl-D-erythritol kinase (289 aa).

K11 is an active-site residue. 93–103 contacts ATP; sequence PLAAGLAGGSA. D135 is a catalytic residue.

Belongs to the GHMP kinase family. IspE subfamily.

It catalyses the reaction 4-CDP-2-C-methyl-D-erythritol + ATP = 4-CDP-2-C-methyl-D-erythritol 2-phosphate + ADP + H(+). Its pathway is isoprenoid biosynthesis; isopentenyl diphosphate biosynthesis via DXP pathway; isopentenyl diphosphate from 1-deoxy-D-xylulose 5-phosphate: step 3/6. In terms of biological role, catalyzes the phosphorylation of the position 2 hydroxy group of 4-diphosphocytidyl-2C-methyl-D-erythritol. This chain is 4-diphosphocytidyl-2-C-methyl-D-erythritol kinase, found in Thermoanaerobacter pseudethanolicus (strain ATCC 33223 / 39E) (Clostridium thermohydrosulfuricum).